A 195-amino-acid polypeptide reads, in one-letter code: Dihydroneopterin triphosphate diphosphatase (195 aa).

The active-site Proton acceptor is Asp73.

This sequence belongs to the HAM1 NTPase family. Requires Mn(2+) as cofactor.

The catalysed reaction is 7,8-dihydroneopterin 3'-triphosphate + H2O = 7,8-dihydroneopterin 3'-phosphate + diphosphate + H(+). Its pathway is cofactor biosynthesis; tetrahydrofolate biosynthesis. In terms of biological role, pyrophosphatase involved in the biosynthesis of tetrahydrofolate. Catalyzes the hydrolysis of dihydroneopterin triphosphate (DHNTP) to dihydroneopterin monophosphate (DHNMP) and pyrophosphate. Shows a strict substrate specificity. Has only weak activity with GTP, ITP, XTP and dTTP, and cannot use ATP, UTP, CTP, NAD(+), NADH, diadenosine triphosphate, diadenosine tetraphosphate, ADP-ribose and UDP-glucose. The sequence is that of Dihydroneopterin triphosphate diphosphatase from Limosilactobacillus reuteri (strain DSM 20016) (Lactobacillus reuteri).